Consider the following 409-residue polypeptide: Nucleoprotein (409 aa).

4 disordered regions span residues 1–31, 44–84, 164–196, and 238–258; these read MASGKAAGKTDAPTPVIKLGGPKPPKVGSSG, LNSP…KGGR, RSGRSTAASSAASSRAPSREVSRGRRSGSEDDL, and VDQVFGPRTKGKEGNFGDDKM. A compositionally biased stretch (low complexity) spans 15–31; that stretch reads PVIKLGGPKPPKVGSSG. An RNA-binding region spans residues 29–160; sequence SSGNVSWFQA…GNFRWDFIPL (132 aa). The CoV N NTD domain maps to 31–156; it reads GNVSWFQAIK…GGPDGNFRWD (126 aa). A compositionally biased stretch (basic residues) spans 70-84; that stretch reads YWRRQARFKPGKGGR. Positions 166-179 are enriched in low complexity; the sequence is GRSTAASSAASSRA. Composition is skewed to basic and acidic residues over residues 180–192 and 247–258; these read PSREVSRGRRSGS and KGKEGNFGDDKM. Residues Ser-190 and Ser-192 each carry the phosphoserine; by host modification. Residues 215–331 form the CoV N CTD domain; sequence TKAKADEMAH…QCVDGVGTRP (117 aa). The dimerization stretch occupies residues 226-333; sequence RYCKRTIPPN…VDGVGTRPKD (108 aa). Residues Cys-320 and Cys-323 are joined by a disulfide bond. Residues 326–409 are disordered; the sequence is GVGTRPKDDE…GDSALGENEL (84 aa). The segment covering 358-367 has biased composition (basic residues); that stretch reads QRPKKEKKPK. Over residues 368 to 384 the composition is skewed to basic and acidic residues; that stretch reads KQDDEVDKALTSDEERN. A Phosphothreonine; by host modification is found at Thr-378. At Ser-379 the chain carries Phosphoserine; by host.

This sequence belongs to the gammacoronavirus nucleocapsid protein family. Homooligomer. Both monomeric and oligomeric forms interact with RNA. Interacts with protein M. Interacts with NSP3; this interaction serves to tether the genome to the newly translated replicase-transcriptase complex at a very early stage of infection. Post-translationally, ADP-ribosylated. The ADP-ribosylation is retained in the virion during infection. Phosphorylated on serine and threonine residues.

It localises to the virion. Its subcellular location is the host endoplasmic reticulum-Golgi intermediate compartment. The protein resides in the host Golgi apparatus. In terms of biological role, packages the positive strand viral genome RNA into a helical ribonucleocapsid (RNP) and plays a fundamental role during virion assembly through its interactions with the viral genome and membrane protein M. Plays an important role in enhancing the efficiency of subgenomic viral RNA transcription as well as viral replication. The protein is Nucleoprotein of Gallus gallus (Chicken).